The primary structure comprises 175 residues: Protein FMP23, mitochondrial (175 aa).

A mitochondrion-targeting transit peptide spans 1–38; it reads MLINHLSKIRTVRHFSNIKPVLSKEVSRRVIVAPASHF.

It localises to the mitochondrion. May be involved in mitochondrial iron or copper homeostatis. In Saccharomyces cerevisiae (strain ATCC 204508 / S288c) (Baker's yeast), this protein is Protein FMP23, mitochondrial (FMP23).